Reading from the N-terminus, the 551-residue chain is Colicin-E6 (551 aa).

Disordered stretches follow at residues 1–74 (MSGG…SGGG), 244–269 (LSPG…NTRD), 293–317 (PDQV…HPVE), 406–501 (NKQA…WYGD), and 517–551 (EGYR…KKYL). Over residues 20–35 (INGGPTGLGVGGGASD) the composition is skewed to gly residues. Positions 36–45 (GSGWSSENNP) are enriched in low complexity. Residues 46 to 74 (WGGGSGSGIHWGGGSGHGNGGGNGNSGGG) show a composition bias toward gly residues. Composition is skewed to basic and acidic residues over residues 296–317 (VKQR…HPVE) and 430–484 (ESRK…EGKP). The ribosome inactivating activity stretch occupies residues 455–551 (KGVKDYGHDY…DPKRNIKKYL (97 aa)). The interval 530-551 (FEPKTGNQLKGPDPKRNIKKYL) is binding of immunity protein.

The protein belongs to the cloacin colicin family.

Its function is as follows. Inactivates ribosomes by hydrolyzing 16S RNA in 30S ribosomes at a specific site. In terms of biological role, colicins are polypeptide toxins produced by and active against E.coli and closely related bacteria. The sequence is that of Colicin-E6 from Escherichia coli.